The following is a 298-amino-acid chain: Syntaxin-125 (298 aa).

The residue at position 1 (methionine 1) is an N-acetylmethionine. Over 1-274 the chain is Cytoplasmic; sequence MNDLFSNSFK…KSSRKWTCYA (274 aa). The stretch at 25–155 forms a coiled coil; sequence TMNLDKFFED…NEYKETVERR (131 aa). The t-SNARE coiled-coil homology domain maps to 198–260; it reads ISEIQERHDA…RRGTDQLQDA (63 aa). The chain crosses the membrane as a helical; Anchor for type IV membrane protein span at residues 275–295; that stretch reads IILFIVIFILLLIPLLPHIML. The Vesicular portion of the chain corresponds to 296–298; sequence MLK.

It belongs to the syntaxin family. In terms of assembly, part of the t-SNARE complex.

The protein localises to the membrane. Its function is as follows. Vesicle trafficking protein that functions in the secretory pathway. In Arabidopsis thaliana (Mouse-ear cress), this protein is Syntaxin-125 (SYP125).